The following is a 419-amino-acid chain: Vascular endothelial growth factor C (419 aa).

An N-terminal signal peptide occupies residues 1-31; the sequence is MHLLGFFSVACSLLAAALLPGPREAPAAAAA. Residues 32–111 constitute a propeptide, or 102; it reads FESGLDLSDA…RTEETIKFAA (80 aa). 3 disulfide bridges follow: C131–C173, C162–C209, and C166–C211. N-linked (GlcNAc...) asparagine glycans are attached at residues N175, N205, and N240. Positions 228–419 are excised as a propeptide; sequence SLPATLPQCQ…PSYWKRPQMS (192 aa). 4 consecutive repeat copies span residues 280–295, 304–319, 328–343, and 347–362. A 4 X 16 AA repeats of C-X(10)-C-X-C-X(1,3)-C region spans residues 280 to 362; that stretch reads CGPNKELDEE…LNPGKCACEC (83 aa).

It belongs to the PDGF/VEGF growth factor family. Homodimer; non-covalent and antiparallel. Interacts with FLT4/VEGFR3; the interaction is required for FLT4/VEGFR3 homodimarization and activation. Undergoes a complex proteolytic maturation which generates a variety of processed secreted forms with increased activity toward VEGFR-3, but only the fully processed form could activate VEGFR-2. VEGF-C first form an antiparallel homodimer linked by disulfide bonds. Before secretion, a cleavage occurs between Arg-227 and Ser-228 producing a heterotetramer. The next extracellular step of the processing removes the N-terminal propeptide. Finally the mature VEGF-C is composed mostly of two VEGF homology domains (VHDs) bound by non-covalent interactions. In terms of tissue distribution, expressed in the spleen. Expressed in the lymph node, thymus, appendix and bone marrow. Expressed in the heart, placenta, skeletal muscle, ovary and small intestine. Expressed in the prostate, testis and colon.

Its subcellular location is the secreted. Growth factor active in angiogenesis, and endothelial cell growth, stimulating their proliferation and migration and also has effects on the permeability of blood vessels. May function in angiogenesis of the venous and lymphatic vascular systems during embryogenesis, and also in the maintenance of differentiated lymphatic endothelium in adults. Binds and activates KDR/VEGFR2 and FLT4/VEGFR3 receptors. The protein is Vascular endothelial growth factor C (VEGFC) of Homo sapiens (Human).